A 323-amino-acid chain; its full sequence is Galactosylgalactosylxylosylprotein 3-beta-glucuronosyltransferase 2 (323 aa).

The Cytoplasmic segment spans residues M1–K2. A helical; Signal-anchor for type II membrane protein membrane pass occupies residues S3–L23. Residues D24 to V323 are Lumenal-facing. A disordered region spans residues R51–P80. A glycan (N-linked (GlcNAc...) asparagine) is linked at N67. UDP-alpha-D-glucuronate-binding positions include P87–Y89, D118, R155, R160, and D185–D187. D187 is a binding site for Mn(2+). The segment at W234–D243 is interaction with galactose moiety of substrate glycoprotein. E273 serves as the catalytic Proton donor/acceptor. A glycan (N-linked (GlcNAc...) asparagine) is linked at N292. H300–R302 is a UDP-alpha-D-glucuronate binding site.

Belongs to the glycosyltransferase 43 family. In terms of assembly, homodimer. Requires Mn(2+) as cofactor. In terms of tissue distribution, expressed in the trachea, retina, spinal cord, hippocampus and other brain regions, and, at lower levels, in testis and ovary.

Its subcellular location is the golgi apparatus membrane. It carries out the reaction 3-O-(beta-D-galactosyl-(1-&gt;3)-beta-D-galactosyl-(1-&gt;4)-beta-D-xylosyl)-L-seryl-[protein] + UDP-alpha-D-glucuronate = 3-O-(beta-D-GlcA-(1-&gt;3)-beta-D-Gal-(1-&gt;3)-beta-D-Gal-(1-&gt;4)-beta-D-Xyl)-L-seryl-[protein] + UDP + H(+). Its pathway is protein modification; protein glycosylation. Its function is as follows. Involved in the biosynthesis of L2/HNK-1 carbohydrate epitope on both glycolipids and glycoproteins. The chain is Galactosylgalactosylxylosylprotein 3-beta-glucuronosyltransferase 2 (B3GAT2) from Homo sapiens (Human).